A 351-amino-acid chain; its full sequence is Dihydroorotate dehydrogenase (quinone) (351 aa).

Residues Ala-65 to Lys-69 and Thr-89 each bind FMN. Lys-69 is a substrate binding site. Substrate is bound at residue Asn-114–Phe-118. FMN is bound by residues Asn-150 and Asn-183. Asn-183 contributes to the substrate binding site. The active-site Nucleophile is the Ser-186. Asn-188 serves as a coordination point for substrate. FMN-binding residues include Lys-228 and Thr-256. Asn-257–Thr-258 contributes to the substrate binding site. Residues Gly-279, Gly-308, and Tyr-329–Thr-330 each bind FMN.

The protein belongs to the dihydroorotate dehydrogenase family. Type 2 subfamily. In terms of assembly, monomer. It depends on FMN as a cofactor.

It is found in the cell membrane. The enzyme catalyses (S)-dihydroorotate + a quinone = orotate + a quinol. It functions in the pathway pyrimidine metabolism; UMP biosynthesis via de novo pathway; orotate from (S)-dihydroorotate (quinone route): step 1/1. In terms of biological role, catalyzes the conversion of dihydroorotate to orotate with quinone as electron acceptor. This chain is Dihydroorotate dehydrogenase (quinone), found in Acidovorax ebreus (strain TPSY) (Diaphorobacter sp. (strain TPSY)).